A 362-amino-acid polypeptide reads, in one-letter code: Class I histocompatibility antigen, Gogo-B*0102 alpha chain (362 aa).

The signal sequence occupies residues 1–24; that stretch reads MRVTAPRTLLLLLSAALALTETWA. An alpha-1 region spans residues 25–114; the sequence is GSHSMRYFDT…ALRYYNQSEA (90 aa). Topologically, residues 25–308 are extracellular; that stretch reads GSHSMRYFDT…EPSSQSTIPI (284 aa). A glycan (N-linked (GlcNAc...) asparagine) is linked at Asn110. An alpha-2 region spans residues 115 to 206; that stretch reads GSHTFQRMFG…ENGRETLQRA (92 aa). Cystine bridges form between Cys125-Cys188 and Cys227-Cys283. The alpha-3 stretch occupies residues 207–298; that stretch reads DTPKTHVTHH…GLPKPLTLRW (92 aa). Residues 209–295 form the Ig-like C1-type domain; that stretch reads PKTHVTHHPI…QHEGLPKPLT (87 aa). The segment at 299–308 is connecting peptide; sequence EPSSQSTIPI. The chain crosses the membrane as a helical span at residues 309 to 332; the sequence is VGIVAGLAVLAVVVIGAVVTAVIC. Residues 333 to 362 are Cytoplasmic-facing; that stretch reads RRKSSGGKGGSYSQAASSDSAQGSDVSLTA. Residues 335 to 362 form a disordered region; that stretch reads KSSGGKGGSYSQAASSDSAQGSDVSLTA. Residues 343-362 are compositionally biased toward low complexity; sequence SYSQAASSDSAQGSDVSLTA.

The protein belongs to the MHC class I family. Heterodimer of an alpha chain and a beta chain (beta-2-microglobulin).

It localises to the membrane. Involved in the presentation of foreign antigens to the immune system. This is Class I histocompatibility antigen, Gogo-B*0102 alpha chain from Gorilla gorilla gorilla (Western lowland gorilla).